Consider the following 388-residue polypeptide: Processive diacylglycerol beta-glucosyltransferase (388 aa).

Belongs to the glycosyltransferase 28 family. UgtP subfamily.

The protein localises to the cell membrane. The catalysed reaction is a 1,2-diacyl-3-O-(beta-D-glucopyranosyl)-sn-glycerol + UDP-alpha-D-glucose = a 1,2-diacyl-3-O-(beta-D-Glc-(1-&gt;6)-beta-D-Glc)-sn-glycerol + UDP + H(+). The enzyme catalyses a 1,2-diacyl-3-O-(beta-D-Glc-(1-&gt;6)-beta-D-Glc)-sn-glycerol + UDP-alpha-D-glucose = a 1,2-diacyl-3-O-(beta-D-Glc-(1-&gt;6)-beta-D-Glc-(1-&gt;6)-beta-D-Glc)-sn-glycerol + UDP + H(+). It catalyses the reaction a 1,2-diacyl-sn-glycerol + UDP-alpha-D-glucose = a 1,2-diacyl-3-O-(beta-D-glucopyranosyl)-sn-glycerol + UDP + H(+). The protein operates within glycolipid metabolism; diglucosyl-diacylglycerol biosynthesis. Functionally, processive glucosyltransferase involved in the biosynthesis of both the bilayer- and non-bilayer-forming membrane glucolipids. Is able to successively transfer up to three glucosyl residues to diacylglycerol (DAG), thereby catalyzing the formation of beta-monoglucosyl-DAG (3-O-(beta-D-glucopyranosyl)-1,2-diacyl-sn-glycerol), beta-diglucosyl-DAG (3-O-(beta-D-glucopyranosyl-beta-(1-&gt;6)-D-glucopyranosyl)-1,2-diacyl-sn-glycerol) and beta-triglucosyl-DAG (3-O-(beta-D-glucopyranosyl-beta-(1-&gt;6)-D-glucopyranosyl-beta-(1-&gt;6)-D-glucopyranosyl)-1,2-diacyl-sn-glycerol). Beta-diglucosyl-DAG is the predominant glycolipid found in Bacillales and is also used as a membrane anchor for lipoteichoic acid (LTA). The chain is Processive diacylglycerol beta-glucosyltransferase from Bacillus cereus (strain ZK / E33L).